Consider the following 487-residue polypeptide: UDP-N-acetylmuramate--L-alanine ligase (487 aa).

ATP is bound at residue 124 to 130 (GTHGKTT).

This sequence belongs to the MurCDEF family.

It is found in the cytoplasm. It carries out the reaction UDP-N-acetyl-alpha-D-muramate + L-alanine + ATP = UDP-N-acetyl-alpha-D-muramoyl-L-alanine + ADP + phosphate + H(+). It functions in the pathway cell wall biogenesis; peptidoglycan biosynthesis. Cell wall formation. This is UDP-N-acetylmuramate--L-alanine ligase from Acaryochloris marina (strain MBIC 11017).